The following is a 185-amino-acid chain: Large ribosomal subunit protein uL5m (185 aa).

This sequence belongs to the universal ribosomal protein uL5 family. In terms of assembly, component of the mitochondrial ribosome large subunit.

It localises to the mitochondrion. This is Large ribosomal subunit protein uL5m (RPL5) from Arabidopsis thaliana (Mouse-ear cress).